We begin with the raw amino-acid sequence, 247 residues long: Potassium channel Ftrac_2467 (247 aa).

6 helical membrane-spanning segments follow: residues 23–44 (TRIE…VLSS), 56–78 (SMRD…YQHY), 89–117 (KVTI…RFLS), 142–165 (LKLL…LMYW), 187–210 (SIIA…IDPW), and 215–237 (TTIL…GRIT). The RxxxFSD motif signature appears at 24–30 (RIETFSD).

The protein belongs to the TMEM175 family. Homotetramer.

It localises to the cell membrane. The catalysed reaction is K(+)(in) = K(+)(out). In terms of biological role, potassium channel; forms a potassium-permeable leak-like channel with weak selectivity for potassium. The channel is permeable for K(+), Rb(+) and Cs(+). In Marivirga tractuosa (strain ATCC 23168 / DSM 4126 / NBRC 15989 / NCIMB 1408 / VKM B-1430 / H-43) (Microscilla tractuosa), this protein is Potassium channel Ftrac_2467.